The primary structure comprises 567 residues: DNA ligase B (567 aa).

The active-site N6-AMP-lysine intermediate is Lys-132.

Belongs to the NAD-dependent DNA ligase family. LigB subfamily.

The catalysed reaction is NAD(+) + (deoxyribonucleotide)n-3'-hydroxyl + 5'-phospho-(deoxyribonucleotide)m = (deoxyribonucleotide)n+m + AMP + beta-nicotinamide D-nucleotide.. Catalyzes the formation of phosphodiester linkages between 5'-phosphoryl and 3'-hydroxyl groups in double-stranded DNA using NAD as a coenzyme and as the energy source for the reaction. This chain is DNA ligase B, found in Yersinia pestis bv. Antiqua (strain Angola).